Consider the following 284-residue polypeptide: Pantothenate synthetase (284 aa).

An ATP-binding site is contributed by 30 to 37 (MGNLHDGH). The active-site Proton donor is the His-37. Gln-61 contributes to the (R)-pantoate binding site. Gln-61 serves as a coordination point for beta-alanine. Residue 149-152 (GEKD) coordinates ATP. Gln-155 provides a ligand contact to (R)-pantoate. Residues Val-178 and 186–189 (LSSR) each bind ATP.

The protein belongs to the pantothenate synthetase family. As to quaternary structure, homodimer.

The protein localises to the cytoplasm. The catalysed reaction is (R)-pantoate + beta-alanine + ATP = (R)-pantothenate + AMP + diphosphate + H(+). It functions in the pathway cofactor biosynthesis; (R)-pantothenate biosynthesis; (R)-pantothenate from (R)-pantoate and beta-alanine: step 1/1. Catalyzes the condensation of pantoate with beta-alanine in an ATP-dependent reaction via a pantoyl-adenylate intermediate. The protein is Pantothenate synthetase of Photorhabdus laumondii subsp. laumondii (strain DSM 15139 / CIP 105565 / TT01) (Photorhabdus luminescens subsp. laumondii).